Consider the following 160-residue polypeptide: Transcriptional repressor NrdR (160 aa).

The segment at 3 to 34 (CPYCQYEDTQVKDSRPVEEGAVIRRRRVCPVC) is a zinc-finger region. One can recognise an ATP-cone domain in the interval 49–139 (LLVSKKSGRC…VYRDFRNASD (91 aa)).

It belongs to the NrdR family. Zn(2+) is required as a cofactor.

Negatively regulates transcription of bacterial ribonucleotide reductase nrd genes and operons by binding to NrdR-boxes. In Bartonella quintana (strain Toulouse) (Rochalimaea quintana), this protein is Transcriptional repressor NrdR.